Consider the following 729-residue polypeptide: Fatty acid oxidation complex subunit alpha (729 aa).

The tract at residues 1–189 (MLYQGETLQL…KVGLVDAVVA (189 aa)) is enoyl-CoA hydratase/isomerase. Position 296 (aspartate 296) interacts with substrate. The interval 311–729 (EAPKQAAVLG…LSDVSTGQPA (419 aa)) is 3-hydroxyacyl-CoA dehydrogenase. NAD(+) is bound by residues methionine 324, aspartate 343, 400 to 402 (VVE), lysine 407, and serine 429. The active-site For 3-hydroxyacyl-CoA dehydrogenase activity is histidine 450. Asparagine 453 contributes to the NAD(+) binding site. 2 residues coordinate substrate: asparagine 500 and tyrosine 660.

This sequence in the N-terminal section; belongs to the enoyl-CoA hydratase/isomerase family. It in the C-terminal section; belongs to the 3-hydroxyacyl-CoA dehydrogenase family. As to quaternary structure, heterotetramer of two alpha chains (FadB) and two beta chains (FadA).

It catalyses the reaction a (3S)-3-hydroxyacyl-CoA + NAD(+) = a 3-oxoacyl-CoA + NADH + H(+). The enzyme catalyses a (3S)-3-hydroxyacyl-CoA = a (2E)-enoyl-CoA + H2O. The catalysed reaction is a 4-saturated-(3S)-3-hydroxyacyl-CoA = a (3E)-enoyl-CoA + H2O. It carries out the reaction (3S)-3-hydroxybutanoyl-CoA = (3R)-3-hydroxybutanoyl-CoA. It catalyses the reaction a (3Z)-enoyl-CoA = a 4-saturated (2E)-enoyl-CoA. The enzyme catalyses a (3E)-enoyl-CoA = a 4-saturated (2E)-enoyl-CoA. The protein operates within lipid metabolism; fatty acid beta-oxidation. Its function is as follows. Involved in the aerobic and anaerobic degradation of long-chain fatty acids via beta-oxidation cycle. Catalyzes the formation of 3-oxoacyl-CoA from enoyl-CoA via L-3-hydroxyacyl-CoA. It can also use D-3-hydroxyacyl-CoA and cis-3-enoyl-CoA as substrate. The sequence is that of Fatty acid oxidation complex subunit alpha from Serratia proteamaculans (strain 568).